The sequence spans 433 residues: Peptidoglycan DD-endopeptidase ShyC (433 aa).

The chain crosses the membrane as a helical span at residues 10 to 30 (WLHRVLITAFSAIIVFAIFFL). Positions 299, 303, and 380 each coordinate Zn(2+).

It belongs to the peptidase M23B family. Zn(2+) is required as a cofactor.

Its subcellular location is the cell inner membrane. It functions in the pathway cell wall degradation; peptidoglycan degradation. With respect to regulation, reduced activity in 0.5 mM EDTA and a complete loss of activity at higher EDTA concentrations. Cell wall peptidoglycan (PG) DD-endopeptidase. Hydrolyzes peptide cross-links which covalently connect adjacent PG strands probably to allow insertion of new glycans and thus cell wall expansion. Degrades purified whole PG sacculi in vitro. The polypeptide is Peptidoglycan DD-endopeptidase ShyC (Vibrio cholerae serotype O1 (strain ATCC 39315 / El Tor Inaba N16961)).